Reading from the N-terminus, the 222-residue chain is Protein-L-isoaspartate O-methyltransferase (222 aa).

S68 is an active-site residue.

Belongs to the methyltransferase superfamily. L-isoaspartyl/D-aspartyl protein methyltransferase family.

It is found in the cytoplasm. It carries out the reaction [protein]-L-isoaspartate + S-adenosyl-L-methionine = [protein]-L-isoaspartate alpha-methyl ester + S-adenosyl-L-homocysteine. Catalyzes the methyl esterification of L-isoaspartyl residues in peptides and proteins that result from spontaneous decomposition of normal L-aspartyl and L-asparaginyl residues. It plays a role in the repair and/or degradation of damaged proteins. The chain is Protein-L-isoaspartate O-methyltransferase from Koribacter versatilis (strain Ellin345).